A 638-amino-acid polypeptide reads, in one-letter code: Cytoplasmic dynein 1 intermediate chain 2 (638 aa).

Basic and acidic residues-rich tracts occupy residues 1 to 13 (MSDK…ELER) and 20 to 43 (QIRE…KKEA). Disordered regions lie at residues 1 to 135 (MSDK…GRGP) and 154 to 209 (VTYT…HELT). The residue at position 2 (Ser2) is an N-acetylserine. At Ser51 the chain carries Diphosphoserine. Phosphoserine occurs at positions 51 and 90. Positions 88-97 (PSSKSVSTPS) are enriched in low complexity. Thr95 carries the phosphothreonine modification. Phosphoserine occurs at positions 97, 101, and 104. The interaction with DYNLT1 stretch occupies residues 133–165 (RGPIKLGMAKITQVDFPPREIVTYTKETQTPVT). Positions 190–209 (EKILKKDEENDSKAPPHELT) are enriched in basic and acidic residues. WD repeat units lie at residues 277–326 (SKHR…TTPE), 330–370 (HCQS…RTPV), 379–420 (AHTH…HPQD), 429–469 (SKAV…AGIS), 474–519 (GHQG…PLYS), and 568–607 (EGNP…AVPR).

The protein belongs to the dynein intermediate chain family. As to quaternary structure, homodimer. The cytoplasmic dynein 1 complex consists of two catalytic heavy chains (HCs) and a number of non-catalytic subunits presented by intermediate chains (ICs), light intermediate chains (LICs) and light chains (LCs); the composition seems to vary in respect to the IC, LIC and LC composition. The heavy chain homodimer serves as a scaffold for the probable homodimeric assembly of the respective non-catalytic subunits. The ICs and LICs bind directly to the HC dimer and the LCs assemble on the IC dimer. Interacts with DYNLT3. Interacts with DYNLT1. Interacts (dephosphorylated at Ser-90) with DCTN1. Interacts with BICD2. Interacts with SPEF2. Interacts with CFAP61. Post-translationally, the phosphorylation status of Ser-90 appears to be involved in dynactin-dependent target binding. Pyrophosphorylation by 5-diphosphoinositol pentakisphosphate (5-IP7) promotes interaction with DCTN1. Serine pyrophosphorylation is achieved by Mg(2+)-dependent, but enzyme independent transfer of a beta-phosphate from a inositol pyrophosphate to a pre-phosphorylated serine residue. As to expression, skeletal muscle, testis, kidney, brain, heart and spleen.

The protein resides in the cytoplasm. It localises to the cytoskeleton. Its function is as follows. Acts as one of several non-catalytic accessory components of the cytoplasmic dynein 1 complex that are thought to be involved in linking dynein to cargos and to adapter proteins that regulate dynein function. Cytoplasmic dynein 1 acts as a motor for the intracellular retrograde motility of vesicles and organelles along microtubules. The intermediate chains mediate the binding of dynein to dynactin via its 150 kDa component (p150-glued) DCTN1. Involved in membrane-transport, such as Golgi apparatus, late endosomes and lysosomes. This is Cytoplasmic dynein 1 intermediate chain 2 (Dync1i2) from Rattus norvegicus (Rat).